Here is a 298-residue protein sequence, read N- to C-terminus: ATP phosphoribosyltransferase (298 aa).

Belongs to the ATP phosphoribosyltransferase family. Long subfamily. Mg(2+) is required as a cofactor.

Its subcellular location is the cytoplasm. It catalyses the reaction 1-(5-phospho-beta-D-ribosyl)-ATP + diphosphate = 5-phospho-alpha-D-ribose 1-diphosphate + ATP. It functions in the pathway amino-acid biosynthesis; L-histidine biosynthesis; L-histidine from 5-phospho-alpha-D-ribose 1-diphosphate: step 1/9. With respect to regulation, feedback inhibited by histidine. Its function is as follows. Catalyzes the condensation of ATP and 5-phosphoribose 1-diphosphate to form N'-(5'-phosphoribosyl)-ATP (PR-ATP). Has a crucial role in the pathway because the rate of histidine biosynthesis seems to be controlled primarily by regulation of HisG enzymatic activity. This chain is ATP phosphoribosyltransferase, found in Aeromonas salmonicida (strain A449).